Here is a 764-residue protein sequence, read N- to C-terminus: MEYRYSTVVDPSTYETHGLCDGIPLRCHESPELEEIETLRCQEDWRRWVGPLGFYKGGLGPRWNFMAITVPECLPERLGVLGYANELAFLHDDVTDVADYGDLHNDDLKAAFEQAASTGHIEGSASGKRAIQAHIANEMMSIHKQHAITTLEAWAKFAELGSGRQHTTHFKTEDEYIKYRMIDIGTMFWYGMVTFGMGISIPEHELEMCHRLADTAYLNLGLTNDLYSWQKEYETAVAMDRDYVANIIGVIMEERNISEAEAKEVCREKIKKTIVDFRKIVDDTKARDDVSLDTKRYLEGLLYSLSGNLVWSIDCPRYHPWSSYNERQLDWMKNGIPKSPPKVNGNATANGNGVHHAPKESLANGTLNGHDRIHAPAVNGNGASHTSSIKGSTGGNGVTHSPVSNGSAVVNSALSMEIDTDLVNVFARKEYKSINGFKMHEGDNHPSNGQTKLNGNVTSWKVPGDVQTKVIQAPYDYISSLPSKGVRDHAIDALNVWCRVPAAKLDLIKLITNMLHNTSLMLDDLEDGSHLRRGRSSTHTIFGAGQTVNAANYHVIRALEEVQKFGDAESIVIFIEELKSLYVGQSLDLYWTNNAICPSVDEYFQMVENKTGGLFRLFGRLMSLHSSHPVKADLTGFLNQFGRYFQTRDDYQNLTSPEYTKQKGFCEDLDEGKFSLPLIHLMHSAPSNLVVRNIWTQRLVNNKASPAHKQTILELMKENGSLQFTMDALDVLHAKVEKSISDLEARFGVENFQLRLILEMLRKA.

The tract at residues Met-1 to Tyr-324 is terpene cyclase. 2 residues coordinate Mg(2+): Asp-92 and Asp-96. The DDXXD 1 signature appears at Asp-92–Asp-96. The short motif at Asn-224–Glu-232 is the NSE/DTE element. The interval Asn-325–Leu-761 is prenyltransferase. The interval Ala-377–Val-403 is disordered. Positions Asn-381 to Gly-391 are enriched in polar residues. The isopentenyl diphosphate site is built by Lys-484, Arg-487, and His-516. Mg(2+) contacts are provided by Asp-523 and Asp-527. A DDXXD 2 motif is present at residues Asp-523–Asp-527. Arg-532 is a dimethylallyl diphosphate binding site. Arg-533 provides a ligand contact to isopentenyl diphosphate. Dimethylallyl diphosphate contacts are provided by Lys-610, Thr-611, Gln-646, Asn-653, Lys-663, and Lys-673.

This sequence in the N-terminal section; belongs to the terpene synthase family. It in the C-terminal section; belongs to the FPP/GGPP synthase family.

It catalyses the reaction isopentenyl diphosphate + (2E,6E)-farnesyl diphosphate = (2E,6E,10E)-geranylgeranyl diphosphate + diphosphate. The enzyme catalyses (2E,6E,10E)-geranylgeranyl diphosphate = talarodiene + diphosphate. Its pathway is secondary metabolite biosynthesis; terpenoid biosynthesis. Bifunctional type I diterpene synthase; part of the gene cluster that mediates the biosynthesis of talaronoid C, a fusicoccane diterpenoid with an unprecedented tricyclic 5/8/6 ring system. The first step in the pathway is performed by the fusicoccadiene synthase tndC that possesses both prenyl transferase and terpene cyclase activity, converting isopentenyl diphosphate and dimethylallyl diphosphate into geranylgeranyl diphosphate (GGDP) and further converting GGDP into talarodiene, a precursor for talaronoid C. The remaining enzymes from the cluster include the cytochrome P450 monooxygenase tndB, the aldehyde reductase tndE and the alcohol dehydrogenase tndF that are involved in the conversion of talarodiene into talaronoid C. This Aspergillus flavipes protein is Bifunctional type I diterpene synthase tndC.